A 580-amino-acid polypeptide reads, in one-letter code: Probable glucomannan 4-beta-mannosyltransferase 2 (580 aa).

Positions 1-12 are enriched in polar residues; the sequence is MSTNGGAPSQKR. Residues 1 to 33 are disordered; it reads MSTNGGAPSQKRSWLPSRPLLTTTTQTYPPPLL. A compositionally biased stretch (low complexity) spans 15-27; it reads LPSRPLLTTTTQT. A helical transmembrane segment spans residues 85–105; sequence AVWACLAMSAMLVAEAAWMGL. Asp182 is an active-site residue. The substrate site is built by Asp241 and Asp243. The active site involves Asp335. Transmembrane regions (helical) follow at residues 414–434, 437–457, 528–548, and 554–574; these read AIAPILTFLFYCIVIPLSAMV, VTIPVWGLVYIPTAITIMNAI, IYIPELLLALYLLICASYDFV, and YYIYIYLQAVAFTVMGFGFVG.

It belongs to the glycosyltransferase 2 family. Plant cellulose synthase-like A subfamily.

The protein localises to the golgi apparatus membrane. It catalyses the reaction GDP-mannose + (glucomannan)n = GDP + (glucomannan)n+1.. Its function is as follows. Probable mannan synthase which consists of a 4-beta-mannosyltransferase activity on mannan using GDP-mannose. The beta-1,4-mannan product is the backbone for galactomannan synthesis by galactomannan galactosyltransferase. Galactomannan is a noncellulosic polysaccharides of plant cell wall. This chain is Probable glucomannan 4-beta-mannosyltransferase 2, found in Oryza sativa subsp. japonica (Rice).